The chain runs to 657 residues: Regulator of MON1-CCZ1 complex (657 aa).

In terms of domain architecture, Mic1 spans Lys-471–Glu-637.

This sequence belongs to the RMC1 family. As to quaternary structure, found in a complex with RMC1, CCZ1 MON1A and MON1B.

Its subcellular location is the lysosome membrane. It is found in the late endosome membrane. Functionally, component of the CCZ1-MON1 RAB7A guanine exchange factor (GEF). Acts as a positive regulator of CCZ1-MON1A/B function necessary for endosomal/autophagic flux and efficient RAB7A localization. In Homo sapiens (Human), this protein is Regulator of MON1-CCZ1 complex.